The chain runs to 621 residues: Chaperone protein HscA homolog (621 aa).

It belongs to the heat shock protein 70 family.

Chaperone involved in the maturation of iron-sulfur cluster-containing proteins. Has a low intrinsic ATPase activity which is markedly stimulated by HscB. This is Chaperone protein HscA homolog from Ralstonia pickettii (strain 12J).